Consider the following 356-residue polypeptide: Fructose-bisphosphate aldolase 1, chloroplastic (356 aa).

The transit peptide at 1–6 (GLTIRA) directs the protein to the chloroplast. Substrate-binding residues include arginine 53 and lysine 143. The Proton acceptor role is filled by glutamate 183. Lysine 225 functions as the Schiff-base intermediate with dihydroxyacetone-P in the catalytic mechanism.

Belongs to the class I fructose-bisphosphate aldolase family.

Its subcellular location is the plastid. The protein localises to the chloroplast. It catalyses the reaction beta-D-fructose 1,6-bisphosphate = D-glyceraldehyde 3-phosphate + dihydroxyacetone phosphate. It participates in carbohydrate degradation; glycolysis; D-glyceraldehyde 3-phosphate and glycerone phosphate from D-glucose: step 4/4. The chain is Fructose-bisphosphate aldolase 1, chloroplastic from Pisum sativum (Garden pea).